Consider the following 221-residue polypeptide: tRNA (guanine-N(7)-)-methyltransferase (221 aa).

S-adenosyl-L-methionine-binding residues include Glu-46, Asp-71, and Asp-120. The active site involves Asp-120. Asp-156 provides a ligand contact to substrate.

The protein belongs to the class I-like SAM-binding methyltransferase superfamily. TrmB family.

The catalysed reaction is guanosine(46) in tRNA + S-adenosyl-L-methionine = N(7)-methylguanosine(46) in tRNA + S-adenosyl-L-homocysteine. The protein operates within tRNA modification; N(7)-methylguanine-tRNA biosynthesis. Its function is as follows. Catalyzes the formation of N(7)-methylguanine at position 46 (m7G46) in tRNA. In Cytophaga hutchinsonii (strain ATCC 33406 / DSM 1761 / CIP 103989 / NBRC 15051 / NCIMB 9469 / D465), this protein is tRNA (guanine-N(7)-)-methyltransferase.